Reading from the N-terminus, the 138-residue chain is Cysteine desulfuration protein SufE (138 aa).

Residue Cys-51 is the Cysteine persulfide intermediate of the active site.

It belongs to the SufE family. As to quaternary structure, homodimer. Interacts with SufS.

It is found in the cytoplasm. The protein operates within cofactor biosynthesis; iron-sulfur cluster biosynthesis. Its function is as follows. Participates in cysteine desulfuration mediated by SufS. Cysteine desulfuration mobilizes sulfur from L-cysteine to yield L-alanine and constitutes an essential step in sulfur metabolism for biosynthesis of a variety of sulfur-containing biomolecules. Functions as a sulfur acceptor for SufS, by mediating the direct transfer of the sulfur atom from the S-sulfanylcysteine of SufS, an intermediate product of cysteine desulfuration process. The sequence is that of Cysteine desulfuration protein SufE from Escherichia coli O8 (strain IAI1).